The primary structure comprises 157 residues: Cyclic pyranopterin monophosphate synthase (157 aa).

Substrate-binding positions include 74–76 (MCH) and 111–112 (ME). The active site involves Asp-126.

It belongs to the MoaC family. Homohexamer; trimer of dimers.

It carries out the reaction (8S)-3',8-cyclo-7,8-dihydroguanosine 5'-triphosphate = cyclic pyranopterin phosphate + diphosphate. It functions in the pathway cofactor biosynthesis; molybdopterin biosynthesis. Catalyzes the conversion of (8S)-3',8-cyclo-7,8-dihydroguanosine 5'-triphosphate to cyclic pyranopterin monophosphate (cPMP). The polypeptide is Cyclic pyranopterin monophosphate synthase (Carboxydothermus hydrogenoformans (strain ATCC BAA-161 / DSM 6008 / Z-2901)).